A 101-amino-acid chain; its full sequence is Urease subunit beta (101 aa).

This sequence belongs to the urease beta subunit family. Heterotrimer of UreA (gamma), UreB (beta) and UreC (alpha) subunits. Three heterotrimers associate to form the active enzyme.

It localises to the cytoplasm. It carries out the reaction urea + 2 H2O + H(+) = hydrogencarbonate + 2 NH4(+). Its pathway is nitrogen metabolism; urea degradation; CO(2) and NH(3) from urea (urease route): step 1/1. In Rhodopseudomonas palustris (strain HaA2), this protein is Urease subunit beta.